Here is a 156-residue protein sequence, read N- to C-terminus: Large ribosomal subunit protein uL15 (156 aa).

The tract at residues Gly14–Lys35 is disordered.

It belongs to the universal ribosomal protein uL15 family. Part of the 50S ribosomal subunit.

Its function is as follows. Binds to the 23S rRNA. This is Large ribosomal subunit protein uL15 from Pyrobaculum islandicum (strain DSM 4184 / JCM 9189 / GEO3).